The following is an 83-amino-acid chain: Exodeoxyribonuclease 7 small subunit (83 aa).

The protein belongs to the XseB family. Heterooligomer composed of large and small subunits.

Its subcellular location is the cytoplasm. It catalyses the reaction Exonucleolytic cleavage in either 5'- to 3'- or 3'- to 5'-direction to yield nucleoside 5'-phosphates.. In terms of biological role, bidirectionally degrades single-stranded DNA into large acid-insoluble oligonucleotides, which are then degraded further into small acid-soluble oligonucleotides. In Rhodopseudomonas palustris (strain ATCC BAA-98 / CGA009), this protein is Exodeoxyribonuclease 7 small subunit.